Reading from the N-terminus, the 441-residue chain is Serine--tRNA ligase (441 aa).

250–252 (TSE) contacts L-serine. ATP is bound by residues 281-283 (RRE) and Val297. Position 304 (Glu304) interacts with L-serine. 368 to 371 (EIVS) is an ATP binding site. Thr402 serves as a coordination point for L-serine.

The protein belongs to the class-II aminoacyl-tRNA synthetase family. Type-1 seryl-tRNA synthetase subfamily. In terms of assembly, homodimer. The tRNA molecule binds across the dimer.

It localises to the cytoplasm. It carries out the reaction tRNA(Ser) + L-serine + ATP = L-seryl-tRNA(Ser) + AMP + diphosphate + H(+). It catalyses the reaction tRNA(Sec) + L-serine + ATP = L-seryl-tRNA(Sec) + AMP + diphosphate + H(+). It functions in the pathway aminoacyl-tRNA biosynthesis; selenocysteinyl-tRNA(Sec) biosynthesis; L-seryl-tRNA(Sec) from L-serine and tRNA(Sec): step 1/1. Functionally, catalyzes the attachment of serine to tRNA(Ser). Is also able to aminoacylate tRNA(Sec) with serine, to form the misacylated tRNA L-seryl-tRNA(Sec), which will be further converted into selenocysteinyl-tRNA(Sec). The chain is Serine--tRNA ligase from Thermoplasma volcanium (strain ATCC 51530 / DSM 4299 / JCM 9571 / NBRC 15438 / GSS1).